Here is a 207-residue protein sequence, read N- to C-terminus: Guanylate kinase (207 aa).

A Guanylate kinase-like domain is found at 5–184 (GNLFIVSAPS…ALADLVAIIR (180 aa)). Position 12-19 (12-19 (APSGAGKS)) interacts with ATP.

The protein belongs to the guanylate kinase family.

It localises to the cytoplasm. It catalyses the reaction GMP + ATP = GDP + ADP. Essential for recycling GMP and indirectly, cGMP. This chain is Guanylate kinase, found in Shewanella violacea (strain JCM 10179 / CIP 106290 / LMG 19151 / DSS12).